We begin with the raw amino-acid sequence, 160 residues long: uncharacterized protein (160 aa).

C2H2-type zinc fingers lie at residues 10–32 (LSCLLCEQTFDATEKLDEHLPTH), 41–64 (QTCDICGRTMRSSLELHQHYKRYH), and 75–98 (FQCQLCDKVFLLQDHLKVHVKIEH). Y115 carries the post-translational modification Phosphotyrosine. Phosphoserine is present on S116.

The protein localises to the nucleus. In terms of biological role, may be involved in transcriptional regulation. This is an uncharacterized protein from Drosophila melanogaster (Fruit fly).